The sequence spans 352 residues: DNA polymerase IV (352 aa).

Residues 6–187 (IIHIDCDCFY…LPVSKLHGVG (182 aa)) enclose the UmuC domain. Residues Asp10 and Asp105 each contribute to the Mg(2+) site. Glu106 is an active-site residue.

It belongs to the DNA polymerase type-Y family. Monomer. The cofactor is Mg(2+).

Its subcellular location is the cytoplasm. It carries out the reaction DNA(n) + a 2'-deoxyribonucleoside 5'-triphosphate = DNA(n+1) + diphosphate. Poorly processive, error-prone DNA polymerase involved in untargeted mutagenesis. Copies undamaged DNA at stalled replication forks, which arise in vivo from mismatched or misaligned primer ends. These misaligned primers can be extended by PolIV. Exhibits no 3'-5' exonuclease (proofreading) activity. May be involved in translesional synthesis, in conjunction with the beta clamp from PolIII. This is DNA polymerase IV from Ectopseudomonas mendocina (strain ymp) (Pseudomonas mendocina).